Reading from the N-terminus, the 270-residue chain is NADPH-dependent 7-cyano-7-deazaguanine reductase (270 aa).

A substrate-binding site is contributed by 79–81; sequence IES. 81–82 contributes to the NADPH binding site; the sequence is SK. Cys177 serves as the catalytic Thioimide intermediate. Asp184 (proton donor) is an active-site residue. 216-217 contacts substrate; it reads HE. 245-246 is a binding site for NADPH; the sequence is RG.

The protein belongs to the GTP cyclohydrolase I family. QueF type 2 subfamily. Homodimer.

It localises to the cytoplasm. It carries out the reaction 7-aminomethyl-7-carbaguanine + 2 NADP(+) = 7-cyano-7-deazaguanine + 2 NADPH + 3 H(+). The protein operates within tRNA modification; tRNA-queuosine biosynthesis. Catalyzes the NADPH-dependent reduction of 7-cyano-7-deazaguanine (preQ0) to 7-aminomethyl-7-deazaguanine (preQ1). This is NADPH-dependent 7-cyano-7-deazaguanine reductase from Acinetobacter baumannii (strain ACICU).